A 292-amino-acid chain; its full sequence is Expansin-B11 (292 aa).

An N-terminal signal peptide occupies residues 1–27 (MAKSCTLVLLLVALVGLSLLVSPIACS). Asn51 carries an N-linked (GlcNAc...) asparagine glycan. One can recognise an Expansin-like EG45 domain in the interval 82 to 192 (GGACGYQTAV…RRVPCKYSGV (111 aa)). 3 cysteine pairs are disulfide-bonded: Cys85/Cys114, Cys117/Cys187, and Cys122/Cys128. The Expansin-like CBD domain occupies 205 to 287 (FYFEVLIEFE…SWKPGVTYRS (83 aa)).

It belongs to the expansin family. Expansin B subfamily. In terms of tissue distribution, expressed in internodes.

The protein localises to the secreted. It localises to the cell wall. Its subcellular location is the membrane. Its function is as follows. May cause loosening and extension of plant cell walls by disrupting non-covalent bonding between cellulose microfibrils and matrix glucans. No enzymatic activity has been found. May be required for rapid internodal elongation in deepwater rice during submergence. This chain is Expansin-B11 (EXPB11), found in Oryza sativa subsp. japonica (Rice).